Reading from the N-terminus, the 115-residue chain is Con-Ins G1a (115 aa).

Residues 1-24 (MTTSSYFLLMALGLLLYVCQSSFG) form the signal peptide. Positions 25–29 (NQHTR) are excised as a propeptide. P34 bears the 4-hydroxyproline; partial mark. 3 disulfide bridges follow: C38-C101, C50-C114, and C100-C105. The residue at position 41 (E41) is a 4-carboxyglutamate. Positions 53 to 94 (KRNDAGEKRGRASPLWQRRGSLSKLKARAKRNGAFHLPRDGR) are cleaved as a propeptide — c peptide. E98 bears the 4-carboxyglutamate mark. P104 bears the 4-hydroxyproline; partial mark. E109 carries the 4-carboxyglutamate; partial modification. C114 is modified (cysteine amide).

Belongs to the insulin family. Heterodimer of A and B chains; disulfide-linked. As to expression, expressed by the venom gland.

The protein resides in the secreted. In terms of biological role, this venom insulin, from a fish-hunting cone snail, facilitates prey capture by rapidly inducing hypoglycemic shock. It is one of the smallest known insulin found in nature and lacks the C-terminal segment of the B chain that, in human insulin, mediates engagement of the insulin receptor (INSR) and assembly of the hormone's hexameric storage form. Despite lacking this segment, it both binds and activates human insulin receptor (long isoform (HIR-B)) with a high potency (EC(50)=16.28 nM). In vivo, intraperitoneal injection of this peptide into zebrafish lowers blood glucose with the same potency than human insulin. In addition, when applied to water, this peptide reduces overall locomotor activity of zebrafish larvae, observed as a significant decrease in the percentage of time spent swimming and movement frequency. When tested on a mouse model of diabetes, this insulin also lowers blood glucose with a 10-fold lower potency than human insulin. This chain is Con-Ins G1a, found in Conus geographus (Geography cone).